The primary structure comprises 587 residues: Calcium/calmodulin-dependent protein kinase kinase 2 (587 aa).

Over residues methionine 1–serine 11 the composition is skewed to polar residues. Disordered regions lie at residues methionine 1 to proline 32 and glutamate 74 to aspartate 115. Serine 2 is subject to N-acetylserine. A phosphoserine mark is found at serine 99, serine 113, serine 128, serine 132, and serine 136. Polar residues predominate over residues glutamine 101–aspartate 115. Residues tyrosine 164 to valine 445 enclose the Protein kinase domain. Residues isoleucine 170–valine 178 and lysine 193 each bind ATP. The segment at glutamine 203–proline 225 is RP domain. The disordered stretch occupies residues alanine 204–glutamine 224. Aspartate 311 serves as the catalytic Proton acceptor. The interval glutamate 471–histidine 476 is autoinhibitory domain. The segment at valine 474–phenylalanine 499 is calmodulin-binding. Residues serine 494 and serine 510 each carry the phosphoserine modification. The interval glycine 496–glutamate 587 is disordered. Residues proline 520–glutamine 535 are compositionally biased toward basic and acidic residues. A compositionally biased stretch (pro residues) spans proline 569–glutamine 579. Position 571 is a phosphoserine (serine 571).

It belongs to the protein kinase superfamily. Ser/Thr protein kinase family. In terms of assembly, interacts with calmodulin. Post-translationally, phosphorylated by PKA. Each isoform may show a different pattern of phosphorylation. Autophosphorylated. Mainly expressed in brain, but detected in all tissues tested (at protein level). In the brain, isoform 1 may be predominant. with high levels in the cerebellum and hippocampus, although isoform 3 is detectable. Isoform 3 is also expressed in lung.

The protein resides in the nucleus. Its subcellular location is the cytoplasm. It localises to the cell projection. The protein localises to the neuron projection. It carries out the reaction L-seryl-[protein] + ATP = O-phospho-L-seryl-[protein] + ADP + H(+). The enzyme catalyses L-threonyl-[protein] + ATP = O-phospho-L-threonyl-[protein] + ADP + H(+). Activated by Ca(2+)/calmodulin. Binding of calmodulin may relieve intrasteric autoinhibition. Autophosphorylation does not alter activity or regulation by Ca(2+)/calmodulin. In part, activity is independent on Ca(2+)/calmodulin. Functionally, calcium/calmodulin-dependent protein kinase belonging to a proposed calcium-triggered signaling cascade involved in a number of cellular processes. Phosphorylates CAMK1 and CAMK4. Phosphorylates CAMK1D. Seems to be involved in hippocampal activation of CREB1. Efficiently phosphorylates 5'-AMP-activated protein kinase (AMPK) trimer, including that consisting of PRKAA1, PRKAB1 and PRKAG1. This phosphorylation is stimulated in response to Ca(2+) signals. May play a role in neurite growth. Isoform 2 may promote neurite elongation, while isoform 1 may promoter neurite branching. This chain is Calcium/calmodulin-dependent protein kinase kinase 2 (Camkk2), found in Rattus norvegicus (Rat).